The sequence spans 199 residues: Photosystem I reaction center subunit XI (199 aa).

A run of 2 helical transmembrane segments spans residues 108-128 (VTAG…LLVL) and 165-185 (FWLG…TLHL).

Belongs to the PsaL family.

Its subcellular location is the cellular thylakoid membrane. The chain is Photosystem I reaction center subunit XI from Prochlorococcus marinus (strain MIT 9215).